The primary structure comprises 37 residues: Large ribosomal subunit protein bL36c (37 aa).

It belongs to the bacterial ribosomal protein bL36 family.

It localises to the plastid. Its subcellular location is the chloroplast. The protein is Large ribosomal subunit protein bL36c of Nicotiana tomentosiformis (Tobacco).